The primary structure comprises 138 residues: Actin-related protein 2/3 complex subunit 5 (138 aa).

Residues 1–21 form a disordered region; sequence MNYEDDNVESGQAGKSDAEYK.

It belongs to the ARPC5 family. In terms of assembly, component of the Arp2/3 complex composed of arpB/Arp2, arpC/Arp3, arcA/p41-arc, arcB/p34-arc, arcC/p21-arc, arcD/p20-arc and arcE/p16-arc. Interacts with carmil (via the region between the LRR domain and COOH-terminal proline-rich domain); carmil is required for Arp2/3-dependent actin nucleation. Arp2/3 complex, MyoB, MyoC, and the alpha and beta subunits of capping protein all form a larger complex with carmil.

Its subcellular location is the cytoplasm. It is found in the cytoskeleton. The protein resides in the cytosol. The protein localises to the cell cortex. It localises to the cell projection. Its subcellular location is the pseudopodium. Functionally, functions as a component of the Arp2/3 complex which is involved in regulation of actin polymerization and together with an activating nucleation-promoting factor (NPF) mediates the formation of branched actin networks. Seems to contact the pointed end of the daughter actin filament. The Arp2/3 complex is involved in organizing the actin system in cell motility and chemotaxis, in phagocytosis and macropinocytosis, at late steps of endosome processing, and in mitosis. In concert with a group of other proteins, the Arp2/3 complex plays a general role in the rapid activation and adaptation of the actin system to its multiple functions. The polypeptide is Actin-related protein 2/3 complex subunit 5 (arcE) (Dictyostelium discoideum (Social amoeba)).